Consider the following 421-residue polypeptide: 4-hydroxy-3-methylbut-2-en-1-yl diphosphate synthase (flavodoxin) (421 aa).

Residues C298, C301, C344, and E351 each contribute to the [4Fe-4S] cluster site.

This sequence belongs to the IspG family. It depends on [4Fe-4S] cluster as a cofactor.

The enzyme catalyses (2E)-4-hydroxy-3-methylbut-2-enyl diphosphate + oxidized [flavodoxin] + H2O + 2 H(+) = 2-C-methyl-D-erythritol 2,4-cyclic diphosphate + reduced [flavodoxin]. The protein operates within isoprenoid biosynthesis; isopentenyl diphosphate biosynthesis via DXP pathway; isopentenyl diphosphate from 1-deoxy-D-xylulose 5-phosphate: step 5/6. Functionally, converts 2C-methyl-D-erythritol 2,4-cyclodiphosphate (ME-2,4cPP) into 1-hydroxy-2-methyl-2-(E)-butenyl 4-diphosphate. The chain is 4-hydroxy-3-methylbut-2-en-1-yl diphosphate synthase (flavodoxin) from Neisseria gonorrhoeae (strain ATCC 700825 / FA 1090).